Reading from the N-terminus, the 117-residue chain is RutC family protein HD_0322 (117 aa).

It belongs to the RutC family.

This Haemophilus ducreyi (strain 35000HP / ATCC 700724) protein is RutC family protein HD_0322.